Consider the following 433-residue polypeptide: Tol-Pal system protein TolB (433 aa).

Residues 1-21 form the signal peptide; the sequence is MRNLLRGMLVVICCMAGIAAA.

It belongs to the TolB family. In terms of assembly, the Tol-Pal system is composed of five core proteins: the inner membrane proteins TolA, TolQ and TolR, the periplasmic protein TolB and the outer membrane protein Pal. They form a network linking the inner and outer membranes and the peptidoglycan layer.

It is found in the periplasm. In terms of biological role, part of the Tol-Pal system, which plays a role in outer membrane invagination during cell division and is important for maintaining outer membrane integrity. The protein is Tol-Pal system protein TolB of Pseudomonas fluorescens (strain ATCC BAA-477 / NRRL B-23932 / Pf-5).